Here is a 131-residue protein sequence, read N- to C-terminus: Fumarate reductase subunit C (131 aa).

The next 3 membrane-spanning stretches (helical) occupy residues 30–50, 63–83, and 109–129; these read EGTA…LFAL, FLQN…ALLH, and IIKS…FVAL.

It belongs to the FrdC family. Part of an enzyme complex containing four subunits: a flavoprotein (FrdA), an iron-sulfur protein (FrdB), and two hydrophobic anchor proteins (FrdC and FrdD).

It localises to the cell inner membrane. Its function is as follows. Two distinct, membrane-bound, FAD-containing enzymes are responsible for the catalysis of fumarate and succinate interconversion; fumarate reductase is used in anaerobic growth, and succinate dehydrogenase is used in aerobic growth. Anchors the catalytic components of the fumarate reductase complex to the cell inner membrane, binds quinones. The chain is Fumarate reductase subunit C from Escherichia coli O17:K52:H18 (strain UMN026 / ExPEC).